A 757-amino-acid chain; its full sequence is MRFNQYSYINFPKENVLSELKKCGFDLQNTANHKDSLETFLRRFFFTYQDTNYPLSILAADKKTDLLTFFQSEDELTADIFYTVAFQLLGFSYLVDFEDSDVFRKETGFPIIYGDLIENLYQLLNTRTKKGNTLIDQLVSDGLIPEDNDYHYFNGKSLATFSNQDVIREVVYVESRVDTDQKGLSDLVKVSIIRPRFDGKIPAIMTASPYHQGTNDKASDKALYKMEGELKVKLPHKIELEKPQLNLVQPQGQAELIAEAEEKLTHINSSYTLNDYFLPRGFANLYVSGVGTKDSTGFMTNGDYQQIEAYKNVIDWLNGRCRAFTDHTRQRQVKADWSNGKVATTGLSYLGTMSNGLATTGVDGLEVIIAEAGISSWYNYYRENGLVTSPGGYPGEDFDSLAELTYSRNLLAGDYIRGNEAHQADLEKVKAQLDRKTGDYNQFWHDRNYLLNAHKVKAEVVFTHGSQDWNVKPLHVYQMFHALPTHIHKHLFFHNGAHVYMNNWQSIDFRESINALLTKKLLGQETDFQLPTVIWQDNTAPQTWLSLDNFGGQENCKTFSLGQEEQAIQNQYPDKDFERYGKTYQAFNTELYQGKANQITINLPVTKDLHLNGRAQLNLRIKSSTNKGLLSAQLLEFGQKKYLQPYPAILSARTIDNGRYHMLENLCELPFRPEAQRVVTKGYLNLQNRSDLLLVEDITADEWMDVQFELQPTIYKLKEGDTLRLVLYTTDFEITIRDNTDYHLTVDLAQSMLTLPC.

Active-site charge relay system residues include serine 348, aspartate 468, and histidine 498.

It belongs to the peptidase S15 family. Homodimer.

It localises to the cytoplasm. It catalyses the reaction Hydrolyzes Xaa-Pro-|- bonds to release unblocked, N-terminal dipeptides from substrates including Ala-Pro-|-p-nitroanilide and (sequentially) Tyr-Pro-|-Phe-Pro-|-Gly-Pro-|-Ile.. Removes N-terminal dipeptides sequentially from polypeptides having unsubstituted N-termini provided that the penultimate residue is proline. The protein is Xaa-Pro dipeptidyl-peptidase of Streptococcus pneumoniae (strain Hungary19A-6).